The following is a 690-amino-acid chain: MSFFNISRRFYSQIVKKSVKIKRMSVEDIKKARAAVPFNREQLESVLRGRFFYAPAFDLYGGVSGLYDYGPPGCAFQNNIIDAWRKHFILEEDMLEVDCTMLTPYEVLKTSGHVDKFSDWMCRDLKTGEIFRADHLVEEVLEARLKGDQEARGLVEDANAAAKDDAEKKKRKKKVKQIKAVKLDDDVVKEYEEILAKIDGYSGPELGELMEKYDIGNPVTGETLESPRAFNLMFETAIGPSGQLKGYLRPETAQGQFLNFNKLLEFNNSKTPFASASIGKSFRNEISPRAGLLRVREFLMAEIEHFVDPLDKSHPKFNEIKDIKLSFLPRDVQEAGSTEPIVKTVGEAVASRMVDNETLGYFIARIYQFLMKIGVDESKLRFRQHMANEMAHYAADCWDGELKTSYGWIECVGCADRSAYDLTVHSKKTKEKLVVRQKLDNPIEVTKWEIDLTKKLFGPKFRKDAPKVESHLLNMSQDDLASKAELLKANGKFTIKVDGVDGEVELDDKLVKIEQRTKVEHVREYVPSVIEPSFGIGRIIYSVFEHSFWNRPEDNARSVLSFPPLVAPTKVLLVPLSNHKDLVPVTTEVAKILRKSQIPFKIDDSGVSIGKRYARNDELGTPFGVTIDFESAKDHSVTLRERDSTKQVRGSVENVIKAIRDITYNGASWEEGTKDLTPFIAQAEAEAETD.

A mitochondrion-targeting transit peptide spans 1–24 (MSFFNISRRFYSQIVKKSVKIKRM). Position 25 is an N-acetylserine (Ser25). At Ser226 the chain carries Phosphoserine. Glycine is bound at residue Glu251. ATP-binding positions include 283-285 (RNE) and 294-295 (RV). Glu302 is a binding site for glycine. 410-411 (EC) provides a ligand contact to ATP. Phosphoserine occurs at positions 476 and 528. 531 to 533 (EPS) is a binding site for glycine. Arg538 is an ATP binding site. Thr689 carries the post-translational modification Phosphothreonine.

The protein belongs to the class-II aminoacyl-tRNA synthetase family. In terms of assembly, homodimer.

Its subcellular location is the cytoplasm. The protein resides in the mitochondrion matrix. The enzyme catalyses tRNA(Gly) + glycine + ATP = glycyl-tRNA(Gly) + AMP + diphosphate. It carries out the reaction 2 ATP + H(+) = P(1),P(4)-bis(5'-adenosyl) tetraphosphate + diphosphate. Catalyzes the ATP-dependent ligation of glycine to the 3'-end of its cognate tRNA, via the formation of an aminoacyl-adenylate intermediate (Gly-AMP). Also produces diadenosine tetraphosphate (Ap4A), a universal pleiotropic signaling molecule needed for cell regulation pathways, by direct condensation of 2 ATPs. Thereby, may play a special role in Ap4A homeostasis. The sequence is that of Glycine--tRNA ligase 1, mitochondrial (GRS1) from Saccharomyces cerevisiae (strain ATCC 204508 / S288c) (Baker's yeast).